Reading from the N-terminus, the 234-residue chain is Peptidase E (234 aa).

Active-site charge relay system residues include Ser123, Asp138, and His160.

This sequence belongs to the peptidase S51 family.

The protein resides in the cytoplasm. It catalyses the reaction Dipeptidase E catalyzes the hydrolysis of dipeptides Asp-|-Xaa. It does not act on peptides with N-terminal Glu, Asn or Gln, nor does it cleave isoaspartyl peptides.. In terms of biological role, hydrolyzes dipeptides containing N-terminal aspartate residues. May play a role in allowing the cell to use peptide aspartate to spare carbon otherwise required for the synthesis of the aspartate family of amino acids. This is Peptidase E from Actinobacillus pleuropneumoniae serotype 3 (strain JL03).